The chain runs to 255 residues: 3-oxoacyl-[acyl-carrier-protein] reductase MabA (255 aa).

Residues 32 to 35, Arg-55, 69 to 70, Gly-98, Tyr-161, Lys-165, Ile-194, and Arg-205 contribute to the NADP(+) site; these read NRGI and DV. Residue Tyr-161 is the Proton acceptor of the active site.

Belongs to the short-chain dehydrogenases/reductases (SDR) family. Homotetramer.

It localises to the secreted. The protein localises to the cell wall. It catalyses the reaction a (3R)-hydroxyacyl-[ACP] + NADP(+) = a 3-oxoacyl-[ACP] + NADPH + H(+). The catalysed reaction is a (3R)-3-hydroxyacyl-CoA + NADP(+) = a 3-oxoacyl-CoA + NADPH + H(+). It carries out the reaction (3R)-3-hydroxybutanoyl-CoA + NADP(+) = acetoacetyl-CoA + NADPH + H(+). The enzyme catalyses (3R)-hydroxyoctanoyl-CoA + NADP(+) = 3-oxooctanoyl-CoA + NADPH + H(+). It functions in the pathway lipid metabolism; mycolic acid biosynthesis. In terms of biological role, part of the mycobacterial fatty acid elongation system FAS-II, which is involved in mycolic acid biosynthesis. Catalyzes the NADPH-dependent reduction of beta-ketoacyl derivatives, the second step of the FAS-II elongation cycle. Has a preference for longer substrates. Can use CoA derivatives as substrates in vitro. In Mycolicibacterium smegmatis (strain ATCC 700084 / mc(2)155) (Mycobacterium smegmatis), this protein is 3-oxoacyl-[acyl-carrier-protein] reductase MabA.